A 128-amino-acid chain; its full sequence is uncharacterized protein (128 aa).

A coiled-coil region spans residues 95–123 (IIDFATAKRELDRLTEEIATLKGELAQDK).

The protein localises to the cellular thylakoid membrane. This is an uncharacterized protein from Synechocystis sp. (strain ATCC 27184 / PCC 6803 / Kazusa).